The chain runs to 121 residues: MRHRVKTKSFHRKKEQREALFINLAKSLILNGKVETTLPKAKALRSFVEKLVTLAKEDTIHSKRLVAQRLKDQKVAKKLYTEIAPLFKERNGGYTRIYKLENRRIGDGGEKALIEFVEYPS.

The protein belongs to the bacterial ribosomal protein bL17 family. In terms of assembly, part of the 50S ribosomal subunit. Contacts protein L32.

The sequence is that of Large ribosomal subunit protein bL17 from Sulfurihydrogenibium sp. (strain YO3AOP1).